A 70-amino-acid polypeptide reads, in one-letter code: Large ribosomal subunit protein eL38 (70 aa).

Lys-4 participates in a covalent cross-link: Glycyl lysine isopeptide (Lys-Gly) (interchain with G-Cter in SUMO2). Lys-9 carries the N6-acetyllysine; alternate modification. A Glycyl lysine isopeptide (Lys-Gly) (interchain with G-Cter in SUMO2); alternate cross-link involves residue Lys-9. At Lys-67 the chain carries N6-acetyllysine.

Belongs to the eukaryotic ribosomal protein eL38 family. In terms of assembly, component of the large ribosomal subunit.

It localises to the cytoplasm. In terms of biological role, component of the large ribosomal subunit. The ribosome is a large ribonucleoprotein complex responsible for the synthesis of proteins in the cell. The sequence is that of Large ribosomal subunit protein eL38 (RPL38) from Macaca fascicularis (Crab-eating macaque).